A 928-amino-acid chain; its full sequence is BCAS3 microtubule associated cell migration factor (928 aa).

Methionine 1 is modified (N-acetylmethionine). Residue lysine 215 forms a Glycyl lysine isopeptide (Lys-Gly) (interchain with G-Cter in SUMO1); alternate linkage. Lysine 215 participates in a covalent cross-link: Glycyl lysine isopeptide (Lys-Gly) (interchain with G-Cter in SUMO2); alternate. 2 required for recruitment to preautophagosomal structure in response to mitophagy regions span residues 254 to 312 (RGGA…SRRS) and 437 to 560 (YGGQ…IKAP). 3 positions are modified to phosphoserine: serine 461, serine 480, and serine 488. Disordered regions lie at residues 472-518 (TSKQ…PRLS) and 795-816 (VRSD…RGVS). 2 stretches are compositionally biased toward low complexity: residues 480–494 (SPVP…GSPL) and 505–514 (NNFTNNNPGN). A phosphoserine mark is found at serine 838, serine 886, and serine 898. Residues 868–928 (ESPSRDVVGS…PLSLFPTGFP (61 aa)) form a disordered region. Residues 887–901 (IETLSNSSGSTSGSI) show a composition bias toward low complexity.

This sequence belongs to the BCAS3 family. As to quaternary structure, interacts with histone H3, ESR1, KAT2B and PELP1; the interactions occur in a estrogen-dependent manner. Interacts with beta-tubulin and VIM. Interacts (via C-terminal) with PHAF1; the interaction is requrired for the association with the phagophore. In terms of tissue distribution, expressed in blood islands and yolk sac blood islands (at protein level). Highly expressed in mammary tumors. Expressed in eostrogen-induced epithelial cells of mammary glands. Expressed in brain, heart, kidney, lung, liver and spleen. Expressed in embryonic stem cells, embryoid bodies, endothelial cells and fibroblasts.

The protein resides in the nucleus. It is found in the cytoplasm. It localises to the cytoskeleton. The protein localises to the preautophagosomal structure. Functionally, functions synergistically with PELP1 as a transcriptional coactivator of estrogen receptor-responsive genes. Stimulates histone acetyltransferase activity. Binds to chromatin. Plays a role in angiogenesis. Participates in the regulation of cell polarity and directional endothelial cell migration by mediating both the activation and recruitment of CDC42 and the reorganization of the actin cytoskeleton at the cell leading edge. Promotes filipodia formation. Plays a regulatory role in autophagic activity. In complex with PHAF1, associates with the preautophagosomal structure during both non-selective and selective autophagy. Probably binds phosphatidylinositol 3-phosphate (PtdIns3P) which would mediate the recruitment preautophagosomal structures. This chain is BCAS3 microtubule associated cell migration factor, found in Mus musculus (Mouse).